Here is a 335-residue protein sequence, read N- to C-terminus: Glycerol-3-phosphate dehydrogenase [NAD(P)+] (335 aa).

NADPH contacts are provided by S10, F11, R31, and K105. Positions 105, 136, and 138 each coordinate sn-glycerol 3-phosphate. A140 is an NADPH binding site. The sn-glycerol 3-phosphate site is built by K191, D244, S254, R255, and N256. Residue K191 is the Proton acceptor of the active site. R255 serves as a coordination point for NADPH. Residues V279 and E281 each contribute to the NADPH site.

The protein belongs to the NAD-dependent glycerol-3-phosphate dehydrogenase family.

The protein resides in the cytoplasm. The enzyme catalyses sn-glycerol 3-phosphate + NAD(+) = dihydroxyacetone phosphate + NADH + H(+). The catalysed reaction is sn-glycerol 3-phosphate + NADP(+) = dihydroxyacetone phosphate + NADPH + H(+). Its pathway is membrane lipid metabolism; glycerophospholipid metabolism. Its function is as follows. Catalyzes the reduction of the glycolytic intermediate dihydroxyacetone phosphate (DHAP) to sn-glycerol 3-phosphate (G3P), the key precursor for phospholipid synthesis. The protein is Glycerol-3-phosphate dehydrogenase [NAD(P)+] of Leptospira interrogans serogroup Icterohaemorrhagiae serovar Lai (strain 56601).